The primary structure comprises 208 residues: Thymidylate kinase (208 aa).

Position 10-17 (10-17) interacts with ATP; the sequence is GPEGSGKT.

It belongs to the thymidylate kinase family.

The enzyme catalyses dTMP + ATP = dTDP + ADP. In terms of biological role, phosphorylation of dTMP to form dTDP in both de novo and salvage pathways of dTTP synthesis. The sequence is that of Thymidylate kinase from Bacillus cereus (strain AH187).